Reading from the N-terminus, the 872-residue chain is Bifunctional uridylyltransferase/uridylyl-removing enzyme (872 aa).

Positions 1–332 are uridylyltransferase; that stretch reads MALPNKVKKL…PKHHQPIIQE (332 aa). Residues 333 to 691 are uridylyl-removing; sequence LDRNFERIGN…VSNKAMHGGT (359 aa). The HD domain maps to 450–572; sequence VDEHTHRLIN…VKTERQLDYL (123 aa). ACT domains are found at residues 692-773 and 799-872; these read QVFV…FKKN and LIEI…AETE.

Belongs to the GlnD family. Mg(2+) serves as cofactor.

It catalyses the reaction [protein-PII]-L-tyrosine + UTP = [protein-PII]-uridylyl-L-tyrosine + diphosphate. The catalysed reaction is [protein-PII]-uridylyl-L-tyrosine + H2O = [protein-PII]-L-tyrosine + UMP + H(+). With respect to regulation, uridylyltransferase (UTase) activity is inhibited by glutamine, while glutamine activates uridylyl-removing (UR) activity. Modifies, by uridylylation and deuridylylation, the PII regulatory proteins (GlnB and homologs), in response to the nitrogen status of the cell that GlnD senses through the glutamine level. Under low glutamine levels, catalyzes the conversion of the PII proteins and UTP to PII-UMP and PPi, while under higher glutamine levels, GlnD hydrolyzes PII-UMP to PII and UMP (deuridylylation). Thus, controls uridylylation state and activity of the PII proteins, and plays an important role in the regulation of nitrogen assimilation and metabolism. This chain is Bifunctional uridylyltransferase/uridylyl-removing enzyme, found in Pseudoalteromonas translucida (strain TAC 125).